We begin with the raw amino-acid sequence, 446 residues long: White-opaque regulator 2 (446 aa).

A compositionally biased stretch (polar residues) spans 1-24 (MTQLPSVSELINRTGSIGSSSNIT). The tract at residues 1 to 203 (MTQLPSVSEL…QPNFPYHNNF (203 aa)) is disordered. Residues 30–64 (TTTSATNTTTAATATTVTSTTPRSENSYSPNSPYS) show a composition bias toward low complexity. The segment covering 67–86 (TRPSNTSLTNYSAGSGITVA) has biased composition (polar residues). Composition is skewed to low complexity over residues 87–97 (SSSFQFSQPSP) and 104–120 (STSSQSSSGDSFQQHQS). The span at 121–144 (NPSGVSMSSNTSPRTSIVQSMSSV) shows a compositional bias: polar residues. The span at 166 to 184 (VQPPPQQQQLQQPPPPPPQ) shows a compositional bias: pro residues. Positions 185–195 (QQQHIYPQQQP) are enriched in low complexity. A DNA-binding region (zn(2)-C6 fungal-type) is located at residues 305–332 (CLTCRKRRIKCDERKPTCFNCERSKKSC). The segment at 336 to 402 (QDLSKLPPRK…SGSSTNSRNL (67 aa)) is disordered. Residues 358-369 (NQQQQQQQQNQQ) are compositionally biased toward low complexity. The span at 387 to 401 (HQITSISGSSTNSRN) shows a compositional bias: polar residues.

It is found in the nucleus. Its function is as follows. Transcriptional regulator of the switch between 2 heritable states, the white and opaque states. These 2 cell types differ in many characteristics, including cell structure, mating competence, and virulence. Each state is heritable for many generations, and switching between states occurs stochastically, at low frequency. WOR2 is necessary for the stability of the opaque state phenotypic switching from the white to the opaque phase is a necessary step for mating. Plays a role in cell adhesion and pseudohyphal growth. This is White-opaque regulator 2 (WOR2) from Candida albicans (strain SC5314 / ATCC MYA-2876) (Yeast).